Reading from the N-terminus, the 318-residue chain is DNA repair nuclease/redox regulator APEX1 (318 aa).

A necessary for interaction with YBX1, binding to RNA, association together with NPM1 to rRNA, endoribonuclease activity on abasic RNA and localization in the nucleoli region spans residues 1-33 (MPKRGKKGAVAEDGDELKTEPEAKKSKTTAKKN). Residues 1 to 60 (MPKRGKKGAVAEDGDELKTEPEAKKSKTTAKKNDKEAAGEGPALYEDPPDQKTSPSGKPA) are disordered. Lysine 6 and lysine 7 each carry N6-acetyllysine; by EP300. The short motif at 8–13 (GAVAED) is the Nuclear localization signal (NLS) element. Positions 16–38 (ELKTEPEAKKSKTTAKKNDKEAA) are enriched in basic and acidic residues. The segment at 23 to 33 (AKKSKTTAKKN) is necessary for interaction with NPM1 and for efficient rRNA binding. Residues lysine 27, lysine 31, lysine 32, and lysine 35 each carry the N6-acetyllysine modification. Serine 54 is subject to Phosphoserine. The Nuclear export signal (NES) motif lies at 64–80 (ICSWNVDGLRAWIKKKG). At cysteine 65 the chain carries S-nitrosocysteine; alternate. Cysteine 65 and cysteine 93 are disulfide-bonded. Aspartate 70 contributes to the Mg(2+) binding site. Cysteine 93 is subject to S-nitrosocysteine; alternate. Residue glutamate 96 participates in Mg(2+) binding. The active site involves tyrosine 171. At lysine 197 the chain carries N6-acetyllysine. Mg(2+) contacts are provided by aspartate 210 and asparagine 212. Aspartate 210 acts as the Proton donor/acceptor in catalysis. Threonine 233 carries the post-translational modification Phosphothreonine; by CDK5. The tract at residues 289 to 318 (HSLLTALCDSKIRSKALGSDHCPITLYLAL) is mitochondrial targeting sequence (MTS). Mg(2+) is bound at residue aspartate 308. At cysteine 310 the chain carries S-nitrosocysteine.

This sequence belongs to the DNA repair enzymes AP/ExoA family. Monomer. Homodimer; disulfide-linked. Component of the SET complex, composed of at least APEX1, SET, ANP32A, HMGB2, NME1 and TREX1. Associates with the dimer XRCC5/XRCC6 in a DNA-dependent manner. Interacts with SIRT1; the interaction is increased in the context of genotoxic stress. Interacts with HDAC1, HDAC2 and HDAC3; the interactions are not dependent on the APEX1 acetylation status. Interacts with XRCC1; the interaction is induced by SIRT1 and increased with the APEX1 acetylated form. Interacts with NPM1 (via N-terminal domain); the interaction is RNA-dependent and decreases in hydrogen peroxide-damaged cells. Interacts (via N-terminus) with YBX1 (via C-terminus); the interaction is increased in presence of APEX1 acetylated at Lys-6 and Lys-7. Interacts with HNRNPL; the interaction is DNA-dependent. Interacts (via N-terminus) with KPNA1 and KPNA2. Interacts with TXN; the interaction stimulates the FOS/JUN AP-1 complex DNA-binding activity in a redox-dependent manner. Interacts with GZMA, KRT8, MDM2, POLB, PRDX6, PRPF19, RPLP0, TOMM20 and WDR77. Binds to CDK5. Mg(2+) serves as cofactor. The cofactor is Mn(2+). Post-translationally, phosphorylated. Phosphorylation by kinase PKC or casein kinase CK2 results in enhanced redox activity that stimulates binding of the FOS/JUN AP-1 complex to its cognate binding site. AP-endodeoxyribonuclease activity is not affected by CK2-mediated phosphorylation. Phosphorylation of Thr-233 by CDK5 in response to MPP(+)/MPTP (1-methyl-4-phenylpyridinium) reduces AP-endodeoxyribonuclease activity resulting in accumulation of DNA damage and contributing to neuronal death. In terms of processing, acetylated on Lys-6 and Lys-7. Acetylation is increased by the transcriptional coactivator EP300 acetyltransferase, genotoxic agents like H(2)O(2) and methyl methanesulfonate (MMS). Acetylation increases its binding affinity to the negative calcium response element (nCaRE) DNA promoter. The acetylated form induces a stronger binding of YBX1 to the Y-box sequence in the MDR1 promoter than the unacetylated form. Deacetylated on lysines. Lys-6 and Lys-7 are deacetylated by SIRT1. Cleaved at Lys-31 by granzyme A to create the mitochondrial form; leading in reduction of binding to DNA, AP endodeoxyribonuclease activity, redox activation of transcription factors and to enhanced cell death. Cleaved by granzyme K; leading to intracellular ROS accumulation and enhanced cell death after oxidative stress. Post-translationally, cys-69 and Cys-93 are nitrosylated in response to nitric oxide (NO) and lead to the exposure of the nuclear export signal (NES). In terms of processing, ubiquitinated by MDM2; leading to translocation to the cytoplasm and proteasomal degradation.

Its subcellular location is the nucleus. The protein resides in the nucleolus. The protein localises to the nucleus speckle. It localises to the endoplasmic reticulum. It is found in the cytoplasm. Its subcellular location is the mitochondrion. It catalyses the reaction a deoxyribonucleotide-2'-deoxyribose-5'-monophosphate-DNA + H2O = a 5'-end 2'-deoxyribose-5'-monophosphate-DNA + a 3'-end 2'-deoxyribonucleotide-DNA + H(+). The catalysed reaction is Exonucleolytic cleavage in the 3'- to 5'-direction to yield nucleoside 5'-phosphates.. It carries out the reaction a 3'-end 2'-deoxyribonucleotide-3'-phosphoglycolate-DNA + H2O = 2-phosphoglycolate + a 3'-end 2'-deoxyribonucleotide-DNA + H(+). The enzyme catalyses a 3'-end 2'-deoxyribonucleotide-8-oxoguanine-DNA + H2O = 8-oxo-dGMP + a 3'-end 2'-deoxyribonucleotide-DNA + H(+). NPM1 stimulates endodeoxyribonuclease activity on double-stranded DNA with AP sites, but inhibits endoribonuclease activity on single-stranded RNA containing AP sites. In terms of biological role, multifunctional protein that plays a central role in the cellular response to oxidative stress. The two major activities of APEX1 are DNA repair and redox regulation of transcriptional factors. Functions as an apurinic/apyrimidinic (AP) endodeoxyribonuclease in the base excision repair (BER) pathway of DNA lesions induced by oxidative and alkylating agents. Initiates repair of AP sites in DNA by catalyzing hydrolytic incision of the phosphodiester backbone immediately adjacent to the damage, generating a single-strand break with 5'-deoxyribose phosphate and 3'-hydroxyl ends. Also incises at AP sites in the DNA strand of DNA/RNA hybrids, single-stranded DNA regions of R-loop structures, and single-stranded RNA molecules. Operates at switch sites of immunoglobulin (Ig) constant regions where it mediates Ig isotype class switch recombination. Processes AP sites induced by successive action of AICDA and UNG. Generates staggered nicks in opposite DNA strands resulting in the formation of double-strand DNA breaks that are finally resolved via non-homologous end joining repair pathway. Has 3'-5' exodeoxyribonuclease activity on mismatched deoxyribonucleotides at the 3' termini of nicked or gapped DNA molecules during short-patch BER. Possesses DNA 3' phosphodiesterase activity capable of removing lesions (such as phosphoglycolate and 8-oxoguanine) blocking the 3' side of DNA strand breaks. Also acts as an endoribonuclease involved in the control of single-stranded RNA metabolism. Plays a role in regulating MYC mRNA turnover by preferentially cleaving in between UA and CA dinucleotides of the MYC coding region determinant (CRD). In association with NMD1, plays a role in the rRNA quality control process during cell cycle progression. Acts as a loading factor for POLB onto non-incised AP sites in DNA and stimulates the 5'-terminal deoxyribose 5'-phosphate (dRp) excision activity of POLB. Exerts reversible nuclear redox activity to regulate DNA binding affinity and transcriptional activity of transcriptional factors by controlling the redox status of their DNA-binding domain, such as the FOS/JUN AP-1 complex after exposure to IR. Involved in calcium-dependent down-regulation of parathyroid hormone (PTH) expression by binding to negative calcium response elements (nCaREs). Together with HNRNPL or the dimer XRCC5/XRCC6, associates with nCaRE, acting as an activator of transcriptional repression. May also play a role in the epigenetic regulation of gene expression by participating in DNA demethylation. Stimulates the YBX1-mediated MDR1 promoter activity, when acetylated at Lys-6 and Lys-7, leading to drug resistance. Plays a role in protection from granzyme-mediated cellular repair leading to cell death. Binds DNA and RNA. Associates, together with YBX1, on the MDR1 promoter. Together with NPM1, associates with rRNA. This Pongo pygmaeus (Bornean orangutan) protein is DNA repair nuclease/redox regulator APEX1 (APEX1).